Reading from the N-terminus, the 492-residue chain is Aspartyl/glutamyl-tRNA(Asn/Gln) amidotransferase subunit B (492 aa).

This sequence belongs to the GatB/GatE family. GatB subfamily. As to quaternary structure, heterotrimer of A, B and C subunits.

The enzyme catalyses L-glutamyl-tRNA(Gln) + L-glutamine + ATP + H2O = L-glutaminyl-tRNA(Gln) + L-glutamate + ADP + phosphate + H(+). It catalyses the reaction L-aspartyl-tRNA(Asn) + L-glutamine + ATP + H2O = L-asparaginyl-tRNA(Asn) + L-glutamate + ADP + phosphate + 2 H(+). Its function is as follows. Allows the formation of correctly charged Asn-tRNA(Asn) or Gln-tRNA(Gln) through the transamidation of misacylated Asp-tRNA(Asn) or Glu-tRNA(Gln) in organisms which lack either or both of asparaginyl-tRNA or glutaminyl-tRNA synthetases. The reaction takes place in the presence of glutamine and ATP through an activated phospho-Asp-tRNA(Asn) or phospho-Glu-tRNA(Gln). This chain is Aspartyl/glutamyl-tRNA(Asn/Gln) amidotransferase subunit B, found in Azorhizobium caulinodans (strain ATCC 43989 / DSM 5975 / JCM 20966 / LMG 6465 / NBRC 14845 / NCIMB 13405 / ORS 571).